Consider the following 503-residue polypeptide: Transcription termination/antitermination protein NusA (503 aa).

Residues 139–203 (GEIINGIVKR…KGPQIFLSRV (65 aa)) enclose the S1 motif domain. The 71-residue stretch at 308–378 (RHKVEVVVSQ…LDVEEVIGQL (71 aa)) folds into the KH domain.

It belongs to the NusA family. As to quaternary structure, monomer. Binds directly to the core enzyme of the DNA-dependent RNA polymerase and to nascent RNA.

The protein localises to the cytoplasm. In terms of biological role, participates in both transcription termination and antitermination. The polypeptide is Transcription termination/antitermination protein NusA (Rickettsia conorii (strain ATCC VR-613 / Malish 7)).